The chain runs to 346 residues: Putative [LysW]-L-2-aminoadipate/[LysW]-L-glutamate phosphate reductase (346 aa).

12–15 (SGFT) is an NADP(+) binding site. Cys-147 is an active-site residue. The tract at residues 178-198 (GSSEGGAGGGDASSHPERSGV) is disordered. Position 310 (Asn-310) interacts with NADP(+).

It belongs to the NAGSA dehydrogenase family. Type 1 subfamily. LysY sub-subfamily.

It is found in the cytoplasm. The catalysed reaction is [amino-group carrier protein]-C-terminal-N-(1-carboxy-5-oxopentan-1-yl)-L-glutamine + phosphate + NADP(+) = [amino-group carrier protein]-C-terminal-N-(1-carboxy-5-phosphooxy-5-oxopentan-1-yl)-L-glutamine + NADPH + H(+). The enzyme catalyses [amino-group carrier protein]-C-terminal-gamma-(L-glutamyl-5-semialdehyde)-L-glutamate + phosphate + NADP(+) = [amino-group carrier protein]-C-terminal-gamma-(5-phospho-L-glutamyl)-L-glutamate + NADPH + H(+). It participates in amino-acid biosynthesis; L-lysine biosynthesis via AAA pathway; L-lysine from L-alpha-aminoadipate (Thermus route): step 3/5. The protein operates within amino-acid biosynthesis; L-arginine biosynthesis. In terms of biological role, involved in both the arginine and lysine biosynthetic pathways. The chain is Putative [LysW]-L-2-aminoadipate/[LysW]-L-glutamate phosphate reductase from Haloquadratum walsbyi (strain DSM 16790 / HBSQ001).